Reading from the N-terminus, the 325-residue chain is Olfactory receptor 1S1 (325 aa).

At 1 to 38 (MKTFSSFLQIGRNMHQGNQTTITEFILLGFFKQDEHQN) the chain is on the extracellular side. Residue asparagine 18 is glycosylated (N-linked (GlcNAc...) asparagine). A helical transmembrane segment spans residues 39–62 (LLFVLFLGMYLVTVIGNGLIIVAI). Over 63–70 (SLDTYLHT) the chain is Cytoplasmic. A helical transmembrane segment spans residues 71 to 92 (PMYLFLANLSFADISSISNSVP). Residues 93 to 113 (KMLVNIQTKSQSISYESCITQ) lie on the Extracellular side of the membrane. Cysteines 110 and 202 form a disulfide. A helical membrane pass occupies residues 114–133 (MYFSIVFVVIDNLLLGTMAY). Residues 134-152 (DHFVAICHPLNYTILMRPR) are Cytoplasmic-facing. Residues 153–171 (FGILLTVISWFLSNIIALT) form a helical membrane-spanning segment. Topologically, residues 172–208 (HTLLLIQLLFCNHNTLPHFFCDLAPLLKLSCSDTLIN) are extracellular. A helical transmembrane segment spans residues 209–232 (ELVLFIVGLSVIIFPFTLSFFSYV). Topologically, residues 233–249 (CIIRAVLRVSSTQGKWK) are cytoplasmic. A helical membrane pass occupies residues 250-272 (AFSTCGSHLTVVLLFYGTIVGVY). The Extracellular segment spans residues 273-285 (FFPSSTHPEDTDK). A helical membrane pass occupies residues 286 to 305 (IGAVLFTVVTPMINPFIYSL). Topologically, residues 306-325 (RNKDMKGALRKLINRKISSL) are cytoplasmic.

The protein belongs to the G-protein coupled receptor 1 family.

The protein resides in the cell membrane. In terms of biological role, odorant receptor. This is Olfactory receptor 1S1 (OR1S1) from Homo sapiens (Human).